A 147-amino-acid chain; its full sequence is 3-dehydroquinate dehydratase (147 aa).

The Proton acceptor role is filled by tyrosine 24. Substrate-binding residues include asparagine 74, histidine 80, and aspartate 87. The active-site Proton donor is histidine 100. Residues 101-102 and arginine 111 contribute to the substrate site; that span reads LS.

Belongs to the type-II 3-dehydroquinase family. Homododecamer.

The catalysed reaction is 3-dehydroquinate = 3-dehydroshikimate + H2O. Its pathway is metabolic intermediate biosynthesis; chorismate biosynthesis; chorismate from D-erythrose 4-phosphate and phosphoenolpyruvate: step 3/7. Catalyzes a trans-dehydration via an enolate intermediate. The polypeptide is 3-dehydroquinate dehydratase (Azorhizobium caulinodans (strain ATCC 43989 / DSM 5975 / JCM 20966 / LMG 6465 / NBRC 14845 / NCIMB 13405 / ORS 571)).